The chain runs to 721 residues: WD repeat and coiled-coil-containing protein (721 aa).

Met-1 carries the post-translational modification N-acetylmethionine. WD repeat units lie at residues Gly-55–Ser-98 and Asn-154–Cys-194. Ser-299, Ser-468, Ser-501, and Ser-523 each carry phosphoserine. Polar residues predominate over residues Gln-520–Leu-537. Residues Gln-520–Glu-553 form a disordered region. Thr-530 is subject to Phosphothreonine. The interval Pro-539–Arg-545 is interaction with HCK. A coiled-coil region spans residues Gln-556–Asn-584. Phosphoserine is present on residues Ser-686 and Ser-690.

In terms of assembly, oligomer. Interacts with HCK (via SH3 domain). Post-translationally, phosphorylated on Tyr when associated with HCK.

The protein is WD repeat and coiled-coil-containing protein of Homo sapiens (Human).